A 214-amino-acid chain; its full sequence is ATP phosphoribosyltransferase (214 aa).

Belongs to the ATP phosphoribosyltransferase family. Short subfamily. Heteromultimer composed of HisG and HisZ subunits.

It localises to the cytoplasm. It catalyses the reaction 1-(5-phospho-beta-D-ribosyl)-ATP + diphosphate = 5-phospho-alpha-D-ribose 1-diphosphate + ATP. It participates in amino-acid biosynthesis; L-histidine biosynthesis; L-histidine from 5-phospho-alpha-D-ribose 1-diphosphate: step 1/9. Functionally, catalyzes the condensation of ATP and 5-phosphoribose 1-diphosphate to form N'-(5'-phosphoribosyl)-ATP (PR-ATP). Has a crucial role in the pathway because the rate of histidine biosynthesis seems to be controlled primarily by regulation of HisG enzymatic activity. In Methylibium petroleiphilum (strain ATCC BAA-1232 / LMG 22953 / PM1), this protein is ATP phosphoribosyltransferase.